Consider the following 404-residue polypeptide: S-adenosylmethionine synthase (404 aa).

Histidine 18 lines the ATP pocket. Residue aspartate 20 participates in Mg(2+) binding. Glutamate 46 contributes to the K(+) binding site. The L-methionine site is built by glutamate 59 and glutamine 102. The tract at residues 102-112 (QSPEIAQGVDH) is flexible loop. Residues 178-180 (DGK), 249-250 (KF), aspartate 258, 264-265 (RK), alanine 281, and lysine 285 contribute to the ATP site. An L-methionine-binding site is contributed by aspartate 258. Lysine 289 serves as a coordination point for L-methionine.

This sequence belongs to the AdoMet synthase family. Homotetramer; dimer of dimers. Mg(2+) is required as a cofactor. K(+) serves as cofactor.

It localises to the cytoplasm. The enzyme catalyses L-methionine + ATP + H2O = S-adenosyl-L-methionine + phosphate + diphosphate. It participates in amino-acid biosynthesis; S-adenosyl-L-methionine biosynthesis; S-adenosyl-L-methionine from L-methionine: step 1/1. Functionally, catalyzes the formation of S-adenosylmethionine (AdoMet) from methionine and ATP. The overall synthetic reaction is composed of two sequential steps, AdoMet formation and the subsequent tripolyphosphate hydrolysis which occurs prior to release of AdoMet from the enzyme. This Rhodococcus jostii (strain RHA1) protein is S-adenosylmethionine synthase.